Here is a 105-residue protein sequence, read N- to C-terminus: Flowering-promoting factor 1-like protein 5 (105 aa).

The protein belongs to the FPF1 family.

The sequence is that of Flowering-promoting factor 1-like protein 5 from Oryza sativa subsp. japonica (Rice).